The primary structure comprises 289 residues: Polyamine aminopropyltransferase (289 aa).

In terms of domain architecture, PABS spans 5-238 (TVWHETLHDQ…GIMTFAWATD (234 aa)). Position 33 (glutamine 33) interacts with S-methyl-5'-thioadenosine. Spermidine is bound by residues histidine 64 and aspartate 88. S-methyl-5'-thioadenosine contacts are provided by residues glutamate 108 and 140–141 (DG). The Proton acceptor role is filled by aspartate 158. 158–161 (DCTD) contacts spermidine. Proline 165 provides a ligand contact to S-methyl-5'-thioadenosine.

Belongs to the spermidine/spermine synthase family. Homodimer or homotetramer.

Its subcellular location is the cytoplasm. The catalysed reaction is S-adenosyl 3-(methylsulfanyl)propylamine + putrescine = S-methyl-5'-thioadenosine + spermidine + H(+). Its pathway is amine and polyamine biosynthesis; spermidine biosynthesis; spermidine from putrescine: step 1/1. Functionally, catalyzes the irreversible transfer of a propylamine group from the amino donor S-adenosylmethioninamine (decarboxy-AdoMet) to putrescine (1,4-diaminobutane) to yield spermidine. This chain is Polyamine aminopropyltransferase, found in Enterobacter sp. (strain 638).